The following is a 509-amino-acid chain: Scavenger receptor class B member 1 (509 aa).

The Cytoplasmic portion of the chain corresponds to 1-11; sequence MGGSARARWVA. A helical transmembrane segment spans residues 12–32; that stretch reads VGLGVVGLLCAVLGVVMILVM. The Extracellular segment spans residues 33 to 440; that stretch reads PSLIKQQVLK…YTQLVLMPQV (408 aa). Residues asparagine 102, asparagine 108, asparagine 173, asparagine 212, asparagine 227, asparagine 255, asparagine 310, asparagine 330, and asparagine 383 are each glycosylated (N-linked (GlcNAc...) asparagine). Residues cysteine 251 and cysteine 384 are joined by a disulfide bond. The chain crosses the membrane as a helical span at residues 441-461; it reads LQYVQYVLLGLGGLLLLVPVI. The Cytoplasmic portion of the chain corresponds to 462–509; it reads YQLRSQEKCFLFWSGSKKGSQDKEAIQAYSESLMSPAAKGTVLQEAKL.

It belongs to the CD36 family. In terms of processing, N-glycosylated. Post-translationally, the six cysteines of the extracellular domain are all involved in intramolecular disulfide bonds.

The protein resides in the cell membrane. It localises to the membrane. It is found in the caveola. Functionally, receptor for different ligands such as phospholipids, cholesterol ester, lipoproteins, phosphatidylserine and apoptotic cells. Receptor for HDL, mediating selective uptake of cholesteryl ether and HDL-dependent cholesterol efflux. Also facilitates the flux of free and esterified cholesterol between the cell surface and apoB-containing lipoproteins and modified lipoproteins, although less efficiently than HDL. May be involved in the phagocytosis of apoptotic cells, via its phosphatidylserine binding activity. This is Scavenger receptor class B member 1 (SCARB1) from Cricetulus griseus (Chinese hamster).